Reading from the N-terminus, the 61-residue chain is Photosystem II reaction center protein K (61 aa).

Residues 1 to 24 (MPNILSLTCICFNSVLYPTSFFFA) constitute a propeptide that is removed on maturation. The chain crosses the membrane as a helical span at residues 32–52 (IFNPIVDIMPVIPLFFFLLAF).

Belongs to the PsbK family. As to quaternary structure, PSII is composed of 1 copy each of membrane proteins PsbA, PsbB, PsbC, PsbD, PsbE, PsbF, PsbH, PsbI, PsbJ, PsbK, PsbL, PsbM, PsbT, PsbX, PsbY, PsbZ, Psb30/Ycf12, at least 3 peripheral proteins of the oxygen-evolving complex and a large number of cofactors. It forms dimeric complexes. Detected in both etioplasts and green leaves; PSII is only assembled in green leaves.

The protein resides in the plastid. Its subcellular location is the chloroplast thylakoid membrane. Functionally, one of the components of the core complex of photosystem II (PSII). PSII is a light-driven water:plastoquinone oxidoreductase that uses light energy to abstract electrons from H(2)O, generating O(2) and a proton gradient subsequently used for ATP formation. It consists of a core antenna complex that captures photons, and an electron transfer chain that converts photonic excitation into a charge separation. This chain is Photosystem II reaction center protein K, found in Hordeum vulgare (Barley).